The following is a 692-amino-acid chain: Methionine--tRNA ligase (692 aa).

The 'HIGH' region signature appears at 26-36 (PYANGSIHLGH). Residues Cys-157, Cys-160, Cys-170, and Cys-173 each contribute to the Zn(2+) site. The 'KMSKS' region signature appears at 342-346 (KMSKS). Lys-345 contacts ATP. In terms of domain architecture, tRNA-binding spans 590–692 (DFAKVDLRIA…SGAQPGMRVK (103 aa)).

Belongs to the class-I aminoacyl-tRNA synthetase family. MetG type 1 subfamily. Homodimer. It depends on Zn(2+) as a cofactor.

The protein resides in the cytoplasm. It catalyses the reaction tRNA(Met) + L-methionine + ATP = L-methionyl-tRNA(Met) + AMP + diphosphate. In terms of biological role, is required not only for elongation of protein synthesis but also for the initiation of all mRNA translation through initiator tRNA(fMet) aminoacylation. In Methylobacillus flagellatus (strain ATCC 51484 / DSM 6875 / VKM B-1610 / KT), this protein is Methionine--tRNA ligase.